A 290-amino-acid chain; its full sequence is Putative heme oxygenase 3 (290 aa).

A compositionally biased stretch (acidic residues) spans M1–D12. Residues M1 to S33 form a disordered region. A compositionally biased stretch (basic and acidic residues) spans E13 to S33. HRM repeat units lie at residues K238–A243 and N255–M260.

It belongs to the heme oxygenase family. As to expression, found in the spleen, liver, thymus, prostate, heart, kidney, brain and testis.

It carries out the reaction heme b + 3 reduced [NADPH--hemoprotein reductase] + 3 O2 = biliverdin IXalpha + CO + Fe(2+) + 3 oxidized [NADPH--hemoprotein reductase] + 3 H2O + H(+). In terms of biological role, heme oxygenase cleaves the heme ring at the alpha methene bridge to form biliverdin. Biliverdin is subsequently converted to bilirubin by biliverdin reductase. Heme oxygenase 3 could be implicated in some heme-dependent regulatory role in the cell. In Rattus norvegicus (Rat), this protein is Putative heme oxygenase 3 (Hmox3).